The primary structure comprises 100 residues: Urease subunit gamma (100 aa).

Belongs to the urease gamma subunit family. In terms of assembly, heterotrimer of UreA (gamma), UreB (beta) and UreC (alpha) subunits. Three heterotrimers associate to form the active enzyme.

The protein resides in the cytoplasm. It carries out the reaction urea + 2 H2O + H(+) = hydrogencarbonate + 2 NH4(+). Its pathway is nitrogen metabolism; urea degradation; CO(2) and NH(3) from urea (urease route): step 1/1. The chain is Urease subunit gamma from Azotobacter vinelandii (strain DJ / ATCC BAA-1303).